The following is a 252-amino-acid chain: Imidazole glycerol phosphate synthase subunit HisF (252 aa).

Residues aspartate 11 and aspartate 130 contribute to the active site.

The protein belongs to the HisA/HisF family. Heterodimer of HisH and HisF.

Its subcellular location is the cytoplasm. It catalyses the reaction 5-[(5-phospho-1-deoxy-D-ribulos-1-ylimino)methylamino]-1-(5-phospho-beta-D-ribosyl)imidazole-4-carboxamide + L-glutamine = D-erythro-1-(imidazol-4-yl)glycerol 3-phosphate + 5-amino-1-(5-phospho-beta-D-ribosyl)imidazole-4-carboxamide + L-glutamate + H(+). It participates in amino-acid biosynthesis; L-histidine biosynthesis; L-histidine from 5-phospho-alpha-D-ribose 1-diphosphate: step 5/9. IGPS catalyzes the conversion of PRFAR and glutamine to IGP, AICAR and glutamate. The HisF subunit catalyzes the cyclization activity that produces IGP and AICAR from PRFAR using the ammonia provided by the HisH subunit. The polypeptide is Imidazole glycerol phosphate synthase subunit HisF (Azoarcus sp. (strain BH72)).